Here is a 593-residue protein sequence, read N- to C-terminus: MDSTFDARASNKSYLGSNSIALTKNFEDWNNEAVCEWLSENNFKMSDIEKFQENKIKGDHLEFIGDKILIQMGLSIYERLSFKSIFKKLKNNNKIKIDSTDNYKNECESNSINNSNNNNNNNNNNNNNNNNNNNNNNNNNNNNNNNNNNNNNNKIDTFNSSIKQLNFSQEANDPNIKAPILDINQYKLIEEIGRGAFSIVEKYENKLKPNEFISIKRINVLASEKEMIVKEINMLYSINHPNIIKIIGYYKDEHYYYIATPYYKKGSIAKIVKSIKSKNNSGFSESNVRNISKKILNAIDYLHSSNPPIVHRDIKGDNILLNDSDEPILADFGLSYLAIENNTNFKTACCSPFWAAPEILNKSTSDFSRKCDIYSFGCTILEMIVGSDPWGGKRNHQSHSPPIPTYLTLECKEVLNETLKYNQNFRADSKQLLEAQWFKETSLRNSSNGEIIFSSEDIMKEFKKNGSTIQIGPVKQEYKYKEQFDIENISKWPREPSFIDPKHKNYKEVLNLYDHYINHSPFMAKIGPYVLDLKEELNEKTFYKSLAISSILGKIDKYEPTTNQNLIPSLFFGFINFVLYQTIKHYPSKFRIL.

The SAM domain maps to W29 to N93. Residues E108 to T157 form a disordered region. Low complexity predominate over residues N113–N153. Residues Y186 to F438 enclose the Protein kinase domain. ATP contacts are provided by residues I192–V200 and K216. The active-site Proton acceptor is the D313.

It belongs to the protein kinase superfamily. Ser/Thr protein kinase family.

It catalyses the reaction L-seryl-[protein] + ATP = O-phospho-L-seryl-[protein] + ADP + H(+). The catalysed reaction is L-threonyl-[protein] + ATP = O-phospho-L-threonyl-[protein] + ADP + H(+). The sequence is that of Probable serine/threonine-protein kinase samkB (samkB) from Dictyostelium discoideum (Social amoeba).